The following is a 389-amino-acid chain: DNA replication and repair protein RecF (389 aa).

Residue 30–37 (GPNGFGKT) participates in ATP binding.

Belongs to the RecF family.

It localises to the cytoplasm. Its function is as follows. The RecF protein is involved in DNA metabolism; it is required for DNA replication and normal SOS inducibility. RecF binds preferentially to single-stranded, linear DNA. It also seems to bind ATP. In Mycolicibacterium gilvum (strain PYR-GCK) (Mycobacterium gilvum (strain PYR-GCK)), this protein is DNA replication and repair protein RecF.